A 330-amino-acid chain; its full sequence is MKNTSDYGVLMMNLGTPDAPQTPEVRRYLREFLSDSRVVDLNPLIWKPILNLIILTIRPPKVAKIYQQVWMDEGSPLLVLSERLKEKVKEALSEKKGQTVPVELAMTYGNPSVEVAANKLREQGVKNIIVIPMYPQFSATTTAAAYDRLMKSLKNCPHWPSLQLLHDYADHPMYIKALSNSVRAQWDKQGERRHLVLSYHGIPKRYVTNGDPYARRCETTSRLVAEELELGDHEWTHVYQSRFGREEWLKPYADATLKALPSMGVKKINIISPAFSIDCIETLEEVTLELGDEFKNNGGLAFDYIPALNDTPDQVALYVNLIEQNSKQWT.

Fe cation contacts are provided by histidine 200 and glutamate 281.

Belongs to the ferrochelatase family.

It is found in the cytoplasm. It carries out the reaction heme b + 2 H(+) = protoporphyrin IX + Fe(2+). The protein operates within porphyrin-containing compound metabolism; protoheme biosynthesis; protoheme from protoporphyrin-IX: step 1/1. In terms of biological role, catalyzes the ferrous insertion into protoporphyrin IX. This chain is Ferrochelatase, found in Marinomonas sp. (strain MWYL1).